Consider the following 365-residue polypeptide: tRNA/tmRNA (uracil-C(5))-methyltransferase (365 aa).

S-adenosyl-L-methionine contacts are provided by Q189, Y217, N222, E238, and D298. Residue C323 is the Nucleophile of the active site. Catalysis depends on E357, which acts as the Proton acceptor.

Belongs to the class I-like SAM-binding methyltransferase superfamily. RNA M5U methyltransferase family. TrmA subfamily.

It catalyses the reaction uridine(54) in tRNA + S-adenosyl-L-methionine = 5-methyluridine(54) in tRNA + S-adenosyl-L-homocysteine + H(+). It carries out the reaction uridine(341) in tmRNA + S-adenosyl-L-methionine = 5-methyluridine(341) in tmRNA + S-adenosyl-L-homocysteine + H(+). In terms of biological role, dual-specificity methyltransferase that catalyzes the formation of 5-methyluridine at position 54 (m5U54) in all tRNAs, and that of position 341 (m5U341) in tmRNA (transfer-mRNA). In Shewanella baltica (strain OS185), this protein is tRNA/tmRNA (uracil-C(5))-methyltransferase.